Here is a 256-residue protein sequence, read N- to C-terminus: Pimeloyl-[acyl-carrier protein] methyl ester esterase (256 aa).

One can recognise an AB hydrolase-1 domain in the interval 15–242 (HLVLLHGWGL…AAHAPFISHP (228 aa)). Substrate is bound by residues tryptophan 22, 82 to 83 (SL), and 143 to 147 (FLALQ). Catalysis depends on serine 82, which acts as the Nucleophile. Residues aspartate 207 and histidine 235 contribute to the active site. Position 235 (histidine 235) interacts with substrate.

This sequence belongs to the AB hydrolase superfamily. Carboxylesterase BioH family. Monomer.

The protein resides in the cytoplasm. It catalyses the reaction 6-carboxyhexanoyl-[ACP] methyl ester + H2O = 6-carboxyhexanoyl-[ACP] + methanol + H(+). It participates in cofactor biosynthesis; biotin biosynthesis. The physiological role of BioH is to remove the methyl group introduced by BioC when the pimeloyl moiety is complete. It allows to synthesize pimeloyl-ACP via the fatty acid synthetic pathway through the hydrolysis of the ester bonds of pimeloyl-ACP esters. The sequence is that of Pimeloyl-[acyl-carrier protein] methyl ester esterase from Escherichia fergusonii (strain ATCC 35469 / DSM 13698 / CCUG 18766 / IAM 14443 / JCM 21226 / LMG 7866 / NBRC 102419 / NCTC 12128 / CDC 0568-73).